A 438-amino-acid polypeptide reads, in one-letter code: Methylenetetrahydrofolate--tRNA-(uracil-5-)-methyltransferase TrmFO 2 (438 aa).

9–14 is an FAD binding site; sequence GAGLAG.

Belongs to the MnmG family. TrmFO subfamily. The cofactor is FAD.

It localises to the cytoplasm. The catalysed reaction is uridine(54) in tRNA + (6R)-5,10-methylene-5,6,7,8-tetrahydrofolate + NADH + H(+) = 5-methyluridine(54) in tRNA + (6S)-5,6,7,8-tetrahydrofolate + NAD(+). The enzyme catalyses uridine(54) in tRNA + (6R)-5,10-methylene-5,6,7,8-tetrahydrofolate + NADPH + H(+) = 5-methyluridine(54) in tRNA + (6S)-5,6,7,8-tetrahydrofolate + NADP(+). In terms of biological role, catalyzes the folate-dependent formation of 5-methyl-uridine at position 54 (M-5-U54) in all tRNAs. The protein is Methylenetetrahydrofolate--tRNA-(uracil-5-)-methyltransferase TrmFO 2 of Mycoplasma mycoides subsp. mycoides SC (strain CCUG 32753 / NCTC 10114 / PG1).